Reading from the N-terminus, the 449-residue chain is Glutamyl-tRNA reductase (449 aa).

Residues 49 to 52, Ser-109, 114 to 116, and Gln-120 each bind substrate; these read TCNR and ETQ. Catalysis depends on Cys-50, which acts as the Nucleophile. 189-194 contributes to the NADP(+) binding site; that stretch reads GAGKMS. Residues 427 to 449 form a disordered region; that stretch reads NFTHPREEMEESDEKRSYCGESR.

It belongs to the glutamyl-tRNA reductase family. Homodimer.

It carries out the reaction (S)-4-amino-5-oxopentanoate + tRNA(Glu) + NADP(+) = L-glutamyl-tRNA(Glu) + NADPH + H(+). It functions in the pathway porphyrin-containing compound metabolism; protoporphyrin-IX biosynthesis; 5-aminolevulinate from L-glutamyl-tRNA(Glu): step 1/2. In terms of biological role, catalyzes the NADPH-dependent reduction of glutamyl-tRNA(Glu) to glutamate 1-semialdehyde (GSA). In Carboxydothermus hydrogenoformans (strain ATCC BAA-161 / DSM 6008 / Z-2901), this protein is Glutamyl-tRNA reductase.